Here is a 141-residue protein sequence, read N- to C-terminus: Sigma factor binding protein 2, chloroplastic (141 aa).

Residues 1 to 20 show a composition bias toward polar residues; it reads MDQSSSTLLINQRKSSSSPT. The tract at residues 1–36 is disordered; sequence MDQSSSTLLINQRKSSSSPTRIPPKQKRKSTTTHKP. The N-terminal 38 residues, 1-38, are a transit peptide targeting the chloroplast; it reads MDQSSSTLLINQRKSSSSPTRIPPKQKRKSTTTHKPIK. The Bipartite nuclear localization signal signature appears at 13 to 29; it reads RKSSSSPTRIPPKQKRK. Basic residues predominate over residues 24 to 36; it reads PKQKRKSTTTHKP. A VQ motif is present at residues 55–64; the sequence is FRELVQELTG.

Interacts with sigma factors in chloroplast. Interacts with WRKY33 in the nucleus.

It localises to the plastid. Its subcellular location is the chloroplast. The protein localises to the nucleus. Functions as activator of WRKY33 in plant defense against necrotrophic pathogens by stimulating the DNA-binding activity of WRKY33. This Arabidopsis thaliana (Mouse-ear cress) protein is Sigma factor binding protein 2, chloroplastic (SIB2).